The sequence spans 794 residues: MELRPWLLWVVAATGTLVLLAADAQGQKVFTNTWAVRIPGGPAVANSVARKHGFLNLGQIFGDYYHFWHRGVTKRSLSPHRPRHSRLQREPQVQWLEQQVAKRRTKRDVYQEPTDPKFPQQWYLSGVTQRDLNVKAAWAQGYTGHGIVVSILDDGIEKNHPDLAGNYDPGASFDVNDQDPDPQPRYTQMNDNRHGTRCAGEVAAVANNGVCGVGVAYNARIGGVRMLDGEVTDAVEARSLGLNPNHIHIYSASWGPEDDGKTVDGPARLAEEAFFRGVSQGRGGLGSIFVWASGNGGREHDSCNCDGYTNSIYTLSISSATQFGNVPWYSEACSSTLATTYSSGNQNEKQIVTTDLRQKCTESHTGTSASAPLAAGIIALTLEANKNLTWRDMQHLVVQTSKPAHLNANDWATNGVGRKVSHSYGYGLLDAGAMVALAQNWTTVAPQRKCIIDILTEPKDIGKRLEVRKTVTACLGEPNHITRLEHAQARLTLSYNRRGDLAIHLVSPMGTRSTLLAARPHDYSADGFNDWAFMTTHSWDEDPSGEWVLEIENTSEANNYGTLTKFTLVLYGTAPEGLPVPPESSGCKTLTSSQACVVCEEGFSLHQKSCVQHCPPGFAPQVLDTHYSTENDVETIRASVCAPCHASCATCQGPALTDCLSCPSHASLDPVEQTCSRQSQSSRESPPQQQPPRLPPEVEAGQRLRAGLLPSHLPEVVAGLSCAFIVLVFVTVFLVLQLRSGFSFRGVKVYTMDRGLISYKGLPPEAWQEECPSDSEEDEGRGERTAFIKDQSAL.

The N-terminal stretch at 1–26 (MELRPWLLWVVAATGTLVLLAADAQG) is a signal peptide. Residues 27–107 (QKVFTNTWAV…QQVAKRRTKR (81 aa)) constitute a propeptide, inhibition peptide. At 108 to 715 (DVYQEPTDPK…AGLLPSHLPE (608 aa)) the chain is on the lumenal side. Ca(2+) is bound at residue Asp115. The Peptidase S8 domain occupies 121 to 435 (QWYLSGVTQR…YGLLDAGAMV (315 aa)). Asp153 serves as the catalytic Charge relay system. Asp154 contributes to the substrate binding site. Asp162, Asp174, Asp179, and Asp181 together coordinate Ca(2+). A disordered region spans residues 162 to 183 (DLAGNYDPGASFDVNDQDPDPQ). 191-192 (DN) is a substrate binding site. The active-site Charge relay system is the His194. Positions 205, 208, 210, and 212 each coordinate Ca(2+). 2 cysteine pairs are disulfide-bonded: Cys211/Cys360 and Cys303/Cys333. Substrate is bound by residues Glu236, 253–258 (SWGPED), Asp264, and 292–295 (ASGN). Asp258 is a Ca(2+) binding site. Asp301 contributes to the Ca(2+) binding site. Substrate-binding residues include Asp306 and Tyr308. Glu331 lines the Ca(2+) pocket. Ser368 acts as the Charge relay system in catalysis. Position 368 (Ser368) interacts with substrate. N-linked (GlcNAc...) asparagine glycans are attached at residues Asn387 and Asn440. A P/Homo B domain is found at 444–576 (VAPQRKCIID…TLVLYGTAPE (133 aa)). Residues Cys450 and Cys474 are joined by a disulfide bond. The Cell attachment site motif lies at 498–500 (RGD). Asn553 is a glycosylation site (N-linked (GlcNAc...) asparagine). FU repeat units follow at residues 577–620 (GLPV…GFAP) and 638–681 (ASVC…QSQS). A disordered region spans residues 673-696 (QTCSRQSQSSRESPPQQQPPRLPP). The span at 676–687 (SRQSQSSRESPP) shows a compositional bias: low complexity. Residues 716-738 (VVAGLSCAFIVLVFVTVFLVLQL) form a helical membrane-spanning segment. The Cytoplasmic segment spans residues 739–794 (RSGFSFRGVKVYTMDRGLISYKGLPPEAWQEECPSDSEEDEGRGERTAFIKDQSAL). A cell surface signal region spans residues 759–762 (YKGL). Acidic residues predominate over residues 767–780 (WQEECPSDSEEDEG). A disordered region spans residues 767–794 (WQEECPSDSEEDEGRGERTAFIKDQSAL). A phosphoserine; by CK2 mark is found at Ser773 and Ser775. Residues 773–779 (SDSEEDE) carry the Trans Golgi network signal motif.

Belongs to the peptidase S8 family. Furin subfamily. In terms of assembly, interacts with FLNA. Binds to PACS1 which mediates TGN localization and connection to clathrin adapters. Interacts with LAMP1, LAMP2 and LAMP3. Ca(2+) is required as a cofactor. Post-translationally, the inhibition peptide, which plays the role of an intramolecular chaperone, is autocatalytically removed in the endoplasmic reticulum (ER) and remains non-covalently bound to furin as a potent autoinhibitor. Following transport to the trans Golgi, a second cleavage within the inhibition propeptide results in propeptide dissociation and furin activation. Phosphorylation is required for TGN localization of the endoprotease. In vivo, exists as di-, mono- and non-phosphorylated forms. Seems to be expressed ubiquitously.

It is found in the golgi apparatus. It localises to the trans-Golgi network membrane. The protein resides in the cell membrane. The protein localises to the secreted. Its subcellular location is the endosome membrane. The catalysed reaction is Release of mature proteins from their proproteins by cleavage of -Arg-Xaa-Yaa-Arg-|-Zaa- bonds, where Xaa can be any amino acid and Yaa is Arg or Lys. Releases albumin, complement component C3 and von Willebrand factor from their respective precursors.. Inhibited by the not secondly cleaved propeptide. Inhibited by m-guanidinomethyl-phenylacetyl-Arg-Val-Arg-(amidomethyl)-benzamidine (m-guanidinomethyl-Phac-RVR-Amb) and 4-guanidinomethyl-phenylacetyl-Arg-Tle-Arg-4-amidinobenzylamide (MI-1148). Inhibited by Decanoyl-Arg-Val-Lys-Arg-chloromethylketone (decanoyl-RVKR-CMK). Inhibited by heparin/heparan sulfate-binding. Its function is as follows. Ubiquitous endoprotease within constitutive secretory pathways capable of cleavage at the RX(K/R)R consensus motif. Mediates processing of TGFB1, an essential step in TGF-beta-1 activation. Converts through proteolytic cleavage the non-functional Brain natriuretic factor prohormone into its active hormone BNP(1-32). By mediating processing of accessory subunit ATP6AP1/Ac45 of the V-ATPase, regulates the acidification of dense-core secretory granules in islets of Langerhans cells. In terms of biological role, (Microbial infection) Cleaves and activates diphtheria toxin DT. Functionally, (Microbial infection) Cleaves and activates anthrax toxin protective antigen (PA). (Microbial infection) Cleaves and activates HIV-1 virus Envelope glycoprotein gp160. Its function is as follows. (Microbial infection) Required for H7N1 and H5N1 influenza virus infection probably by cleaving hemagglutinin. In terms of biological role, (Microbial infection) Able to cleave S.pneumoniae serine-rich repeat protein PsrP. Functionally, (Microbial infection) Facilitates human coronaviruses EMC and SARS-CoV-2 infections by proteolytically cleaving the spike protein at the monobasic S1/S2 cleavage site. This cleavage is essential for spike protein-mediated cell-cell fusion and entry into human lung cells. (Microbial infection) Facilitates mumps virus infection by proteolytically cleaving the viral fusion protein F. In Homo sapiens (Human), this protein is Furin.